We begin with the raw amino-acid sequence, 368 residues long: N-acetylneuraminate epimerase (368 aa).

Residues 1–19 (MNKTIMALAIMMASFAANA) form the signal peptide. Kelch repeat units follow at residues 40–84 (TVYI…AFID), 86–137 (NLYV…FVHN), 139–173 (KAYVTGGVNQNIFNGYFEDLNEAGKDSTAIDKINA), 174–219 (HYFD…VNKG), 222–265 (TWLI…VAGG), 287–336 (ENYQ…PWNN), and 338–367 (LLIIGGETAGGKAVTDSVLISVKDNKVTVQ). Glu-228 acts as the Proton acceptor in catalysis.

The protein belongs to the NanM family. In terms of assembly, homodimer.

Its subcellular location is the periplasm. It catalyses the reaction N-acetyl-alpha-neuraminate = N-acetyl-beta-neuraminate. Converts alpha-N-acetylneuranimic acid (Neu5Ac) to the beta-anomer, accelerating the equilibrium between the alpha- and beta-anomers. Probably facilitates sialidase-negative bacteria to compete successfully for limited amounts of extracellular Neu5Ac, which is likely taken up in the beta-anomer. In addition, the rapid removal of sialic acid from solution might be advantageous to the bacterium to damp down host responses. This chain is N-acetylneuraminate epimerase, found in Shigella flexneri serotype 5b (strain 8401).